The sequence spans 267 residues: Flap endonuclease Xni (267 aa).

Asp115 contributes to the Mg(2+) binding site. Residues 171–261 (VAPAQLVDFW…LGFNLREIRY (91 aa)) enclose the 5'-3' exonuclease domain. Leu182, Val193, and Ile196 together coordinate K(+). Residues 195–200 (GIGPKT) are interaction with DNA.

Belongs to the Xni family. Requires Mg(2+) as cofactor. The cofactor is K(+).

Has flap endonuclease activity. During DNA replication, flap endonucleases cleave the 5'-overhanging flap structure that is generated by displacement synthesis when DNA polymerase encounters the 5'-end of a downstream Okazaki fragment. The sequence is that of Flap endonuclease Xni from Aeromonas hydrophila subsp. hydrophila (strain ATCC 7966 / DSM 30187 / BCRC 13018 / CCUG 14551 / JCM 1027 / KCTC 2358 / NCIMB 9240 / NCTC 8049).